Here is a 514-residue protein sequence, read N- to C-terminus: Membrane-bound lytic murein transglycosylase F (514 aa).

The signal sequence occupies residues 1-30; it reads MKKLKINYLFIGILTLLLAAALWPSIPWFG. The non-LT domain stretch occupies residues 31 to 269; it reads KTENHIAAIQ…RIEEKYLGHG (239 aa). Positions 270–514 are LT domain; it reads DDFDYVDTRS…LFTPQKKEEK (245 aa). Residue E314 is part of the active site.

This sequence in the N-terminal section; belongs to the bacterial solute-binding protein 3 family. In the C-terminal section; belongs to the transglycosylase Slt family.

It is found in the cell outer membrane. It catalyses the reaction Exolytic cleavage of the (1-&gt;4)-beta-glycosidic linkage between N-acetylmuramic acid (MurNAc) and N-acetylglucosamine (GlcNAc) residues in peptidoglycan, from either the reducing or the non-reducing ends of the peptidoglycan chains, with concomitant formation of a 1,6-anhydrobond in the MurNAc residue.. Functionally, murein-degrading enzyme that degrades murein glycan strands and insoluble, high-molecular weight murein sacculi, with the concomitant formation of a 1,6-anhydromuramoyl product. Lytic transglycosylases (LTs) play an integral role in the metabolism of the peptidoglycan (PG) sacculus. Their lytic action creates space within the PG sacculus to allow for its expansion as well as for the insertion of various structures such as secretion systems and flagella. This Salmonella choleraesuis (strain SC-B67) protein is Membrane-bound lytic murein transglycosylase F.